The sequence spans 206 residues: Large ribosomal subunit protein uL4 (206 aa).

Residues 46–77 form a disordered region; it reads GTRAQKDREQVKHSTKKPFKQKGTGRARAGMT. A compositionally biased stretch (basic residues) spans 58–70; it reads HSTKKPFKQKGTG.

It belongs to the universal ribosomal protein uL4 family. In terms of assembly, part of the 50S ribosomal subunit.

One of the primary rRNA binding proteins, this protein initially binds near the 5'-end of the 23S rRNA. It is important during the early stages of 50S assembly. It makes multiple contacts with different domains of the 23S rRNA in the assembled 50S subunit and ribosome. Functionally, forms part of the polypeptide exit tunnel. The polypeptide is Large ribosomal subunit protein uL4 (Albidiferax ferrireducens (strain ATCC BAA-621 / DSM 15236 / T118) (Rhodoferax ferrireducens)).